The sequence spans 459 residues: Glutamyl-tRNA reductase (459 aa).

Residues 49–52 (TCNR), Ser109, 114–116 (ETQ), and Gln120 contribute to the substrate site. Cys50 functions as the Nucleophile in the catalytic mechanism. 189–194 (GAGKMG) is an NADP(+) binding site.

It belongs to the glutamyl-tRNA reductase family. As to quaternary structure, homodimer.

It catalyses the reaction (S)-4-amino-5-oxopentanoate + tRNA(Glu) + NADP(+) = L-glutamyl-tRNA(Glu) + NADPH + H(+). It participates in porphyrin-containing compound metabolism; protoporphyrin-IX biosynthesis; 5-aminolevulinate from L-glutamyl-tRNA(Glu): step 1/2. Functionally, catalyzes the NADPH-dependent reduction of glutamyl-tRNA(Glu) to glutamate 1-semialdehyde (GSA). This Halalkalibacterium halodurans (strain ATCC BAA-125 / DSM 18197 / FERM 7344 / JCM 9153 / C-125) (Bacillus halodurans) protein is Glutamyl-tRNA reductase.